A 294-amino-acid chain; its full sequence is Polyketide transferase grgF (294 aa).

Residues cysteine 115, aspartate 240, and histidine 269 contribute to the active site.

The protein belongs to the polyketide transferase af380 family. Homodimer.

It functions in the pathway secondary metabolite biosynthesis. In terms of biological role, polyketide transferase; part of the gene cluster that mediates the biosynthesis of gregatin A, a fungal polyketide featuring an alkylated furanone core. The PKS grgA synthesizes C11 and C4 polyketide chains in the presence and absence of the trans-enoyl reductase grgB, respectively. The polyketide transferase grgF is then responsible for the fusion of the two carbon chains to produce the furanone skeleton of gregatin A. GrgF first undergoes a conformational change to an open form, and the active site Cys-115 is acylated by the C11 chain. After the elimination of the phosphopantetheinyl chain, the second polyketide chain of four carbons long is delivered adjacent to the enzyme-bound C11 chain. The catalytic histidine, His-269, deprotonates a proton from C-2 of the long chain, and the resultant carbanion attacks the C-1 carbonyl of the crotonyl group to perform Claisen condensation, by which the phosphopantetheinyl chain is released. Eventually, hydrolysis of the thioester linkage probably by a His-269-activated water molecule completes the reaction to afford the grgF final product. Next, the cytochrome P450 monooxygenase grgG accepts the unstable grgF final product as substrate and performs the oxidative cyclization to furnish the gregatin scaffold and leads to the formation of desmethylgregatin A. Finally, the O-methyltransferase grgD methylates the carboxyl group of desmethylgregatin A to provide gregatin A. This Penicillium sp protein is Polyketide transferase grgF.